A 407-amino-acid chain; its full sequence is Imidazolonepropionase (407 aa).

Fe(3+) is bound by residues histidine 74 and histidine 76. Residues histidine 74 and histidine 76 each coordinate Zn(2+). The 4-imidazolone-5-propanoate site is built by arginine 83, tyrosine 146, and histidine 179. Tyrosine 146 provides a ligand contact to N-formimidoyl-L-glutamate. Fe(3+) is bound at residue histidine 244. Histidine 244 contributes to the Zn(2+) binding site. Glutamine 247 contributes to the 4-imidazolone-5-propanoate binding site. Aspartate 319 serves as a coordination point for Fe(3+). Aspartate 319 contacts Zn(2+). 2 residues coordinate N-formimidoyl-L-glutamate: asparagine 321 and glycine 323. Threonine 324 serves as a coordination point for 4-imidazolone-5-propanoate.

It belongs to the metallo-dependent hydrolases superfamily. HutI family. It depends on Zn(2+) as a cofactor. Requires Fe(3+) as cofactor.

Its subcellular location is the cytoplasm. The enzyme catalyses 4-imidazolone-5-propanoate + H2O = N-formimidoyl-L-glutamate. Its pathway is amino-acid degradation; L-histidine degradation into L-glutamate; N-formimidoyl-L-glutamate from L-histidine: step 3/3. In terms of biological role, catalyzes the hydrolytic cleavage of the carbon-nitrogen bond in imidazolone-5-propanoate to yield N-formimidoyl-L-glutamate. It is the third step in the universal histidine degradation pathway. This Salmonella heidelberg (strain SL476) protein is Imidazolonepropionase.